Reading from the N-terminus, the 882-residue chain is MTDVTIKTLAAERQTSVERLVQQFADAGIRKSADDSVSAQEKQTLIDHLNQKNSGPDKLTLQRKTRSTLNIPGTGGKSKSVQIEVRKKRTFVKRDPQEAERLAAEEQARREAEESAKREAQQKAEREAAEQAKREAAEQAKREAAEKDKVSNQQDDMTKNAQAEKARREQEAAELKRKAEEEARRKLEEEARRVAEEARRMAEENKWTDNAEPTEDSSDYHVTTSQHARQAEDESDREVEGGRGRGRNAKAARPKKGNKHAESKADREEARAAVRGGKGGKRKGSSLQQGFQKPAQVVNRDVVIGETITVGELANKMAVKGSQVIKAMMKLGAMATINQVIDQETAQLVAEEMGHKVILRRENELEEAVMSDRDTGAAAEPRAPVVTIMGHVDHGKTSLLDYIRSTKVASGEAGGITQHIGAYHVETENGMITFLDTPGHAAFTSMRARGAQATDIVVLVVAADDGVMPQTIEAIQHAKAAQVPVVVAVNKIDKPEADPDRVKNELSQYGILPEEWGGESQFVHVSAKAGTGIDELLDAILLQAEVLELKAVRKGMASGAVIESFLDKGRGPVATVLVREGTLHKGDIVLCGFEYGRVRAMRNELGQEVLEAGPSIPVEILGLSGVPAAGDEVTVVRDEKKAREVALYRQGKFREVKLARQQKSKLENMFANMTEGEVHEVNIVLKADVQGSVEAISDSLLKLSTDEVKVKIIGSGVGGITETDATLAAASNAILVGFNVRADASARKVIEAESLDLRYYSVIYNLIDEVKAAMSGMLSPELKQQIIGLAEVRDVFKSPKFGAIAGCMVTEGVVKRHNPIRVLRDNVVIYEGELESLRRFKDDVNEVRNGMECGIGVKNYNDVRTGDVIEVFEIIEIQRTIA.

The segment at 28-294 (GIRKSADDSV…SSLQQGFQKP (267 aa)) is disordered. Residues 67-81 (STLNIPGTGGKSKSV) are compositionally biased toward polar residues. Positions 92 to 209 (VKRDPQEAER…RMAEENKWTD (118 aa)) are enriched in basic and acidic residues. Positions 244–258 (GRGRNAKAARPKKGN) are enriched in basic residues. Residues 259–272 (KHAESKADREEARA) show a composition bias toward basic and acidic residues. The tr-type G domain maps to 381 to 550 (PRAPVVTIMG…LLQAEVLELK (170 aa)). Positions 390-397 (GHVDHGKT) are G1. 390–397 (GHVDHGKT) provides a ligand contact to GTP. The G2 stretch occupies residues 415–419 (GITQH). The tract at residues 436 to 439 (DTPG) is G3. Residues 436-440 (DTPGH) and 490-493 (NKID) contribute to the GTP site. The tract at residues 490–493 (NKID) is G4. The segment at 526 to 528 (SAK) is G5. Lysine 800 is modified (N6-acetyllysine).

This sequence belongs to the TRAFAC class translation factor GTPase superfamily. Classic translation factor GTPase family. IF-2 subfamily.

It is found in the cytoplasm. Functionally, one of the essential components for the initiation of protein synthesis. Protects formylmethionyl-tRNA from spontaneous hydrolysis and promotes its binding to the 30S ribosomal subunits. Also involved in the hydrolysis of GTP during the formation of the 70S ribosomal complex. This is Translation initiation factor IF-2 from Shigella flexneri serotype 5b (strain 8401).